A 141-amino-acid polypeptide reads, in one-letter code: MGTLQGLLLWLLLGTGGAQAPRGPLRPLCRPVNATLAAENEACPVCITFTTSICAGYCPSMVRVLPAALPPVPQPVCTYRELRFASIRLPGCPPGVDPEVSFPVALSCRCGPCRLSSSDCGGPRAQPLACDLPHLPGLLFL.

An N-terminal signal peptide occupies residues 1-18 (MGTLQGLLLWLLLGTGGA). 6 cysteine pairs are disulfide-bonded: Cys-29–Cys-77, Cys-43–Cys-92, Cys-46–Cys-130, Cys-54–Cys-108, Cys-58–Cys-110, and Cys-113–Cys-120. Residue Asn-33 is glycosylated (N-linked (GlcNAc...) asparagine).

Belongs to the glycoprotein hormones subunit beta family. Heterodimer of a common alpha chain and a unique beta chain which confers biological specificity to thyrotropin, lutropin, follitropin and gonadotropin.

It is found in the secreted. Functionally, promotes spermatogenesis and ovulation by stimulating the testes and ovaries to synthesize steroids. This chain is Lutropin subunit beta (LHB), found in Oryctolagus cuniculus (Rabbit).